Here is a 78-residue protein sequence, read N- to C-terminus: Probable [Fe-S]-dependent transcriptional repressor (78 aa).

Iron-sulfur cluster contacts are provided by C56, C61, C64, and C70.

This sequence belongs to the FeoC family.

Functionally, may function as a transcriptional regulator that controls feoABC expression. This is Probable [Fe-S]-dependent transcriptional repressor from Cronobacter sakazakii (strain ATCC BAA-894) (Enterobacter sakazakii).